The primary structure comprises 293 residues: Cytosolic Fe-S cluster assembly factor CFD1 (293 aa).

ATP is bound at residue 25–32 (GKGGVGKS). Residues Cys-201 and Cys-204 each coordinate [4Fe-4S] cluster. Residue Ser-291 is modified to Phosphoserine.

It belongs to the Mrp/NBP35 ATP-binding proteins family. NUBP2/CFD1 subfamily. As to quaternary structure, heterotetramer of 2 NBP35 and 2 CFD1 chains. Requires [4Fe-4S] cluster as cofactor.

The protein localises to the cytoplasm. In terms of biological role, component of the cytosolic iron-sulfur (Fe/S) protein assembly (CIA) machinery. Required for maturation of extramitochondrial Fe-S proteins. The NBP35-CFD1 heterotetramer forms a Fe-S scaffold complex, mediating the de novo assembly of an Fe-S cluster and its transfer to target apoproteins. Nucleotide binding/hydrolysis seems to be critcal for loading of Fe-S clusters onto CFD1 and NBP35. Required for biogenesis and export of both ribosomal subunits, which may reflect a role in assembly of the Fe/S clusters in RLI1, a protein which performs rRNA processing and ribosome export. The polypeptide is Cytosolic Fe-S cluster assembly factor CFD1 (Saccharomyces cerevisiae (strain ATCC 204508 / S288c) (Baker's yeast)).